Here is a 487-residue protein sequence, read N- to C-terminus: Cytochrome P450 716A75 (487 aa).

A helical membrane pass occupies residues 5–25 (FVSLLSLFLLILLPLSLLFLF). Cys434 serves as a coordination point for heme.

The protein belongs to the cytochrome P450 family. It depends on heme as a cofactor.

It localises to the membrane. It carries out the reaction beta-amyrin + reduced [NADPH--hemoprotein reductase] + O2 = erythrodiol + oxidized [NADPH--hemoprotein reductase] + H2O + H(+). It catalyses the reaction erythrodiol + reduced [NADPH--hemoprotein reductase] + O2 = oleanolic aldehyde + oxidized [NADPH--hemoprotein reductase] + 2 H2O + H(+). The catalysed reaction is oleanolic aldehyde + reduced [NADPH--hemoprotein reductase] + O2 = oleanolate + oxidized [NADPH--hemoprotein reductase] + H2O + 2 H(+). Functionally, catalyzes the C-28 oxidation of beta-amyrin to form erythrodiol. Catalyzes the C-28 oxidation of erythrodiol to form oleanolic aldehyde. Catalyzes the C-28 oxidation of oleanolic aldehyde to form oleanolate. The protein is Cytochrome P450 716A75 of Maesa lanceolata (False assegai).